Reading from the N-terminus, the 304-residue chain is Aspartate carbamoyltransferase catalytic subunit (304 aa).

The carbamoyl phosphate site is built by Arg-49 and Thr-50. Lys-77 serves as a coordination point for L-aspartate. Residues Arg-99, His-127, and Gln-130 each coordinate carbamoyl phosphate. Arg-160 and Arg-211 together coordinate L-aspartate. Carbamoyl phosphate is bound by residues Ala-252 and Pro-253.

The protein belongs to the aspartate/ornithine carbamoyltransferase superfamily. ATCase family. As to quaternary structure, heterododecamer (2C3:3R2) of six catalytic PyrB chains organized as two trimers (C3), and six regulatory PyrI chains organized as three dimers (R2).

The catalysed reaction is carbamoyl phosphate + L-aspartate = N-carbamoyl-L-aspartate + phosphate + H(+). It participates in pyrimidine metabolism; UMP biosynthesis via de novo pathway; (S)-dihydroorotate from bicarbonate: step 2/3. Catalyzes the condensation of carbamoyl phosphate and aspartate to form carbamoyl aspartate and inorganic phosphate, the committed step in the de novo pyrimidine nucleotide biosynthesis pathway. The protein is Aspartate carbamoyltransferase catalytic subunit of Bacillus mycoides (strain KBAB4) (Bacillus weihenstephanensis).